Consider the following 555-residue polypeptide: GPI-anchor transamidase component PIGS (555 aa).

Over 2-18 the chain is Cytoplasmic; that stretch reads AAAGAAATDLEVVRGKR. A cardiolipin contacts are provided by Arg-15 and Arg-18. Residues 19-39 traverse the membrane as a helical segment; the sequence is SALFFAAVAILLGLPLWWKTT. Over 40–517 the chain is Lumenal; it reads ETYRAPLPYS…LHLLYFPDDQ (478 aa). N-linked (GlcNAc...) asparagine glycosylation is found at Asn-267 and Asn-370. Residues 518-532 traverse the membrane as a helical segment; it reads KFAIYIPLFLPMAVP. Over 533-555 the chain is Cytoplasmic; sequence ILLSLVKIFQETRKSWKKPEKID.

It belongs to the PIGS family. Heteropentamer. Part of the GPI-anchor transamidase complex, consisting of PIGK, PIGT, PIGS, PIGU and GAA1.

It is found in the endoplasmic reticulum membrane. Its pathway is glycolipid biosynthesis; glycosylphosphatidylinositol-anchor biosynthesis. Its function is as follows. Component of the glycosylphosphatidylinositol-anchor (GPI-anchor) transamidase (GPI-T) complex that catalyzes the formation of the linkage between a proprotein and a GPI-anchor and participates in GPI anchored protein biosynthesis. In Mus musculus (Mouse), this protein is GPI-anchor transamidase component PIGS.